The sequence spans 201 residues: Casparian strip membrane protein 7 (201 aa).

Positions 1-11 are enriched in acidic residues; it reads MEAGEEIEDGE. Residues 1 to 26 are disordered; it reads MEAGEEIEDGEPSTPTYKAHHPPPHL. At 1-34 the chain is on the cytoplasmic side; sequence MEAGEEIEDGEPSTPTYKAHHPPPHLPPPMRSSG. The helical transmembrane segment at 35–55 threads the bilayer; the sequence is VSLVLSVADLVLRFVAIGGTA. Over 56–86 the chain is Extracellular; sequence GSAIAMATTSETLPFAAPFVRFRAEYSDLPT. The helical transmembrane segment at 87-107 threads the bilayer; the sequence is LMFFVVASSVVCAYLVLSLPA. The Cytoplasmic portion of the chain corresponds to 108 to 128; the sequence is SVVHVVRPGARSSRAILAFLD. Residues 129-149 form a helical membrane-spanning segment; that stretch reads TVMLALLTASASAAAAIVYLA. Residues 150–171 lie on the Extracellular side of the membrane; it reads HRGSARANWLGICQQFTSFCQR. Residues 172–192 form a helical membrane-spanning segment; sequence ITASLVGSFAAAVVLVALVFL. Topologically, residues 193–201 are cytoplasmic; the sequence is SALSLARRA.

This sequence belongs to the Casparian strip membrane proteins (CASP) family. As to quaternary structure, homodimer and heterodimers.

Its subcellular location is the cell membrane. Regulates membrane-cell wall junctions and localized cell wall deposition. Required for establishment of the Casparian strip membrane domain (CSD) and the subsequent formation of Casparian strips, a cell wall modification of the root endodermis that determines an apoplastic barrier between the intraorganismal apoplasm and the extraorganismal apoplasm and prevents lateral diffusion. The polypeptide is Casparian strip membrane protein 7 (Oryza sativa subsp. japonica (Rice)).